A 138-amino-acid chain; its full sequence is Small ribosomal subunit protein uS11c (138 aa).

Residues Met1–Val22 are disordered. A compositionally biased stretch (basic residues) spans Gly9–Val22.

This sequence belongs to the universal ribosomal protein uS11 family. Part of the 30S ribosomal subunit.

The protein resides in the plastid. Its subcellular location is the chloroplast. This is Small ribosomal subunit protein uS11c from Arabis hirsuta (Hairy rock-cress).